A 922-amino-acid polypeptide reads, in one-letter code: Isoleucine--tRNA ligase (922 aa).

The short motif at 58-68 (PYANGDIHIGH) is the 'HIGH' region element. Residue glutamate 552 coordinates L-isoleucyl-5'-AMP. The 'KMSKS' region signature appears at 593 to 597 (KMSKS). Lysine 596 provides a ligand contact to ATP. Residues cysteine 885, cysteine 888, cysteine 905, and cysteine 908 each coordinate Zn(2+).

The protein belongs to the class-I aminoacyl-tRNA synthetase family. IleS type 1 subfamily. In terms of assembly, monomer. Zn(2+) is required as a cofactor.

It localises to the cytoplasm. It carries out the reaction tRNA(Ile) + L-isoleucine + ATP = L-isoleucyl-tRNA(Ile) + AMP + diphosphate. Functionally, catalyzes the attachment of isoleucine to tRNA(Ile). As IleRS can inadvertently accommodate and process structurally similar amino acids such as valine, to avoid such errors it has two additional distinct tRNA(Ile)-dependent editing activities. One activity is designated as 'pretransfer' editing and involves the hydrolysis of activated Val-AMP. The other activity is designated 'posttransfer' editing and involves deacylation of mischarged Val-tRNA(Ile). In Ruthia magnifica subsp. Calyptogena magnifica, this protein is Isoleucine--tRNA ligase.